Here is a 602-residue protein sequence, read N- to C-terminus: MCGIFGIIFAERPRRPLGEILRRGLERLEYRGYDSAGVAVVDRGLVVKKDAGKVAEVAQRYGFDSLQGVVGLAHTRWATHGKPDQVNAHPHVDCRGVIAVVHNGIIEKYAELKEELMKRGHVFRSETDTEVIAHLVEEYKKQGLDTFSAFKKALSRVRGAYAIALIDAENPRAIYFARNLSPLIIGVGEGFNIVASDIPTVLDHTKRVIAVRDGEYGYITAGEVYIEADGVPQDVAARIEEIPWSAEMATKGGYPHFMLKEIYEQPESLASTAAGLEPAQIETVANALLAARNVYIVGAGTSYHAGLTLAFILPRLRITPIPVISSEYAIYEDLYDKDDLAIAISQSGETIDTIKAVKAMRERGVKVVAVTNVVGSTLSRESDVVLYTRAGPEIGVAATKTFTTQVLTLAAVYLTALRALGHDVAEHQRELKAVPDLARKTIEKTAGTAKELAKRLRQRHSAYYLGRGAALPVAMEGALKLKEVAYLHAEAYPAGESKHGPIALVEEGFPVIFVFSDPNTGEKTLSNVAEMKARGALTIGTVPARSDYAKKLDVAIEVPQTSELFAPILHVIPLQMLAYFTAVERGYDPDKPRNLAKTVTVE.

The active-site Nucleophile; for GATase activity is the cysteine 2. The Glutamine amidotransferase type-2 domain maps to 2-222 (CGIFGIIFAE…DGEYGYITAG (221 aa)). SIS domains lie at 284 to 422 (VANA…ALGH) and 452 to 592 (LAKR…PDKP). Residue lysine 597 is the For Fru-6P isomerization activity of the active site.

Homodimer.

It is found in the cytoplasm. It carries out the reaction D-fructose 6-phosphate + L-glutamine = D-glucosamine 6-phosphate + L-glutamate. Catalyzes the first step in hexosamine metabolism, converting fructose-6P into glucosamine-6P using glutamine as a nitrogen source. The sequence is that of Glutamine--fructose-6-phosphate aminotransferase [isomerizing] from Pyrobaculum aerophilum (strain ATCC 51768 / DSM 7523 / JCM 9630 / CIP 104966 / NBRC 100827 / IM2).